The chain runs to 316 residues: Large ribosomal subunit protein uL10 (316 aa).

The disordered stretch occupies residues 282-316; that stretch reads ASAAKADEPKKEEAKKVEEEEEEEEDGFMGFGMFD. Residues 286 to 299 are compositionally biased toward basic and acidic residues; it reads KADEPKKEEAKKVE.

Belongs to the universal ribosomal protein uL10 family. As to quaternary structure, P0 forms a pentameric complex by interaction with dimers of P1 and P2. In terms of processing, phosphorylated.

In terms of biological role, ribosomal protein P0 is the functional equivalent of E.coli protein L10. The polypeptide is Large ribosomal subunit protein uL10 (RPLP0) (Plasmodium falciparum (isolate 7G8)).